Reading from the N-terminus, the 1118-residue chain is Isoleucine--tRNA ligase (1118 aa).

The 'HIGH' region motif lies at Pro64–His74. The 'KMSKS' region motif lies at Lys647–Arg651. Lys650 contributes to the ATP binding site.

It belongs to the class-I aminoacyl-tRNA synthetase family. IleS type 2 subfamily. Monomer. The cofactor is Zn(2+).

It is found in the cytoplasm. It catalyses the reaction tRNA(Ile) + L-isoleucine + ATP = L-isoleucyl-tRNA(Ile) + AMP + diphosphate. In terms of biological role, catalyzes the attachment of isoleucine to tRNA(Ile). As IleRS can inadvertently accommodate and process structurally similar amino acids such as valine, to avoid such errors it has two additional distinct tRNA(Ile)-dependent editing activities. One activity is designated as 'pretransfer' editing and involves the hydrolysis of activated Val-AMP. The other activity is designated 'posttransfer' editing and involves deacylation of mischarged Val-tRNA(Ile). This is Isoleucine--tRNA ligase from Ehrlichia ruminantium (strain Gardel).